Here is a 146-residue protein sequence, read N- to C-terminus: Ribonuclease P protein component (146 aa).

This sequence belongs to the RnpA family. Consists of a catalytic RNA component (M1 or rnpB) and a protein subunit.

It carries out the reaction Endonucleolytic cleavage of RNA, removing 5'-extranucleotides from tRNA precursor.. RNaseP catalyzes the removal of the 5'-leader sequence from pre-tRNA to produce the mature 5'-terminus. It can also cleave other RNA substrates such as 4.5S RNA. The protein component plays an auxiliary but essential role in vivo by binding to the 5'-leader sequence and broadening the substrate specificity of the ribozyme. The polypeptide is Ribonuclease P protein component (Helicobacter hepaticus (strain ATCC 51449 / 3B1)).